The following is a 212-amino-acid chain: Pyridoxine/pyridoxamine 5'-phosphate oxidase (212 aa).

Residues arginine 8–tyrosine 11 and lysine 66 contribute to the substrate site. FMN is bound by residues arginine 61 to lysine 66, phenylalanine 76 to threonine 77, lysine 83, and glutamine 105. Residues tyrosine 123, arginine 127, and serine 131 each coordinate substrate. FMN is bound by residues glutamine 140 to serine 141 and tryptophan 184. Arginine 190–histidine 192 contributes to the substrate binding site. Arginine 194 is a binding site for FMN.

The protein belongs to the pyridoxamine 5'-phosphate oxidase family. In terms of assembly, homodimer. It depends on FMN as a cofactor.

The catalysed reaction is pyridoxamine 5'-phosphate + O2 + H2O = pyridoxal 5'-phosphate + H2O2 + NH4(+). It catalyses the reaction pyridoxine 5'-phosphate + O2 = pyridoxal 5'-phosphate + H2O2. Its pathway is cofactor metabolism; pyridoxal 5'-phosphate salvage; pyridoxal 5'-phosphate from pyridoxamine 5'-phosphate: step 1/1. The protein operates within cofactor metabolism; pyridoxal 5'-phosphate salvage; pyridoxal 5'-phosphate from pyridoxine 5'-phosphate: step 1/1. In terms of biological role, catalyzes the oxidation of either pyridoxine 5'-phosphate (PNP) or pyridoxamine 5'-phosphate (PMP) into pyridoxal 5'-phosphate (PLP). The protein is Pyridoxine/pyridoxamine 5'-phosphate oxidase of Ralstonia pickettii (strain 12J).